The sequence spans 882 residues: Valine--tRNA ligase (882 aa).

Residues 45 to 55 (PNVTGKLHLGH) carry the 'HIGH' region motif. Residues 519–523 (KMSKS) carry the 'KMSKS' region motif. ATP is bound at residue Lys-522. Residues 808-877 (LADLLNVEEE…DATQERIVEM (70 aa)) adopt a coiled-coil conformation.

The protein belongs to the class-I aminoacyl-tRNA synthetase family. ValS type 1 subfamily. As to quaternary structure, monomer.

It localises to the cytoplasm. It catalyses the reaction tRNA(Val) + L-valine + ATP = L-valyl-tRNA(Val) + AMP + diphosphate. Its function is as follows. Catalyzes the attachment of valine to tRNA(Val). As ValRS can inadvertently accommodate and process structurally similar amino acids such as threonine, to avoid such errors, it has a 'posttransfer' editing activity that hydrolyzes mischarged Thr-tRNA(Val) in a tRNA-dependent manner. This Streptococcus pyogenes serotype M6 (strain ATCC BAA-946 / MGAS10394) protein is Valine--tRNA ligase.